A 490-amino-acid chain; its full sequence is Ribulose bisphosphate carboxylase large chain (490 aa).

N127 and T177 together coordinate substrate. K179 acts as the Proton acceptor in catalysis. K181 is a binding site for substrate. Mg(2+)-binding residues include K205, D207, and E208. K205 carries the N6-carboxylysine modification. H297 serves as the catalytic Proton acceptor. Positions 298, 330, and 382 each coordinate substrate.

Belongs to the RuBisCO large chain family. Type I subfamily. In terms of assembly, heterohexadecamer of 8 large chains and 8 small chains. Mg(2+) serves as cofactor.

It is found in the plastid. The protein localises to the chloroplast. The catalysed reaction is 2 (2R)-3-phosphoglycerate + 2 H(+) = D-ribulose 1,5-bisphosphate + CO2 + H2O. It carries out the reaction D-ribulose 1,5-bisphosphate + O2 = 2-phosphoglycolate + (2R)-3-phosphoglycerate + 2 H(+). Its function is as follows. RuBisCO catalyzes two reactions: the carboxylation of D-ribulose 1,5-bisphosphate, the primary event in carbon dioxide fixation, as well as the oxidative fragmentation of the pentose substrate in the photorespiration process. Both reactions occur simultaneously and in competition at the same active site. This Thalassiosira pseudonana (Marine diatom) protein is Ribulose bisphosphate carboxylase large chain.